Reading from the N-terminus, the 360-residue chain is Phospho-N-acetylmuramoyl-pentapeptide-transferase (360 aa).

Transmembrane regions (helical) follow at residues 18–38 (VFSY…FISL), 73–93 (TMGG…WADL), 94–114 (SNIY…VGFV), 134–154 (YFWQ…IAQG), 168–188 (LLPQ…VGTS), 199–219 (GLAI…AYVT), 239–259 (LVIV…FNTY), 263–283 (VFMG…IAIL), 288–308 (LVLF…ILQV), and 338–358 (VIVR…ATLK).

It belongs to the glycosyltransferase 4 family. MraY subfamily. Mg(2+) is required as a cofactor.

It is found in the cell inner membrane. The enzyme catalyses UDP-N-acetyl-alpha-D-muramoyl-L-alanyl-gamma-D-glutamyl-meso-2,6-diaminopimeloyl-D-alanyl-D-alanine + di-trans,octa-cis-undecaprenyl phosphate = di-trans,octa-cis-undecaprenyl diphospho-N-acetyl-alpha-D-muramoyl-L-alanyl-D-glutamyl-meso-2,6-diaminopimeloyl-D-alanyl-D-alanine + UMP. It functions in the pathway cell wall biogenesis; peptidoglycan biosynthesis. Catalyzes the initial step of the lipid cycle reactions in the biosynthesis of the cell wall peptidoglycan: transfers peptidoglycan precursor phospho-MurNAc-pentapeptide from UDP-MurNAc-pentapeptide onto the lipid carrier undecaprenyl phosphate, yielding undecaprenyl-pyrophosphoryl-MurNAc-pentapeptide, known as lipid I. This is Phospho-N-acetylmuramoyl-pentapeptide-transferase from Colwellia psychrerythraea (strain 34H / ATCC BAA-681) (Vibrio psychroerythus).